The chain runs to 141 residues: Large ribosomal subunit protein uL22 (141 aa).

The disordered stretch occupies residues 108-141 (KSEEKKTVAKKTTTTKAPAKKTTSTKKATVKKES). Over residues 117 to 134 (KKTTTTKAPAKKTTSTKK) the composition is skewed to low complexity.

It belongs to the universal ribosomal protein uL22 family. As to quaternary structure, part of the 50S ribosomal subunit.

Functionally, this protein binds specifically to 23S rRNA; its binding is stimulated by other ribosomal proteins, e.g. L4, L17, and L20. It is important during the early stages of 50S assembly. It makes multiple contacts with different domains of the 23S rRNA in the assembled 50S subunit and ribosome. In terms of biological role, the globular domain of the protein is located near the polypeptide exit tunnel on the outside of the subunit, while an extended beta-hairpin is found that lines the wall of the exit tunnel in the center of the 70S ribosome. The sequence is that of Large ribosomal subunit protein uL22 from Campylobacter jejuni subsp. jejuni serotype O:2 (strain ATCC 700819 / NCTC 11168).